The sequence spans 167 residues: MSKKQTKDKANGAKATKTIALNKRARHEYHLEERYEAGLALQGWEVKAIRAGRANIVDGYAYVRSGEIYLIGAQITPLIQASTHTVPVERRDRKLLLHRAEIDKVLSRVEREGYTLVPTALYWSSNKVKLEIALAKGKQNHDKRDAAKDRDWQRDKQRVMRRHNRDA.

Residues 139–158 (QNHDKRDAAKDRDWQRDKQR) show a composition bias toward basic and acidic residues. The disordered stretch occupies residues 139 to 167 (QNHDKRDAAKDRDWQRDKQRVMRRHNRDA).

This sequence belongs to the SmpB family.

It localises to the cytoplasm. Its function is as follows. Required for rescue of stalled ribosomes mediated by trans-translation. Binds to transfer-messenger RNA (tmRNA), required for stable association of tmRNA with ribosomes. tmRNA and SmpB together mimic tRNA shape, replacing the anticodon stem-loop with SmpB. tmRNA is encoded by the ssrA gene; the 2 termini fold to resemble tRNA(Ala) and it encodes a 'tag peptide', a short internal open reading frame. During trans-translation Ala-aminoacylated tmRNA acts like a tRNA, entering the A-site of stalled ribosomes, displacing the stalled mRNA. The ribosome then switches to translate the ORF on the tmRNA; the nascent peptide is terminated with the 'tag peptide' encoded by the tmRNA and targeted for degradation. The ribosome is freed to recommence translation, which seems to be the essential function of trans-translation. This chain is SsrA-binding protein, found in Xanthomonas axonopodis pv. citri (strain 306).